The chain runs to 274 residues: Energy-coupling factor transporter ATP-binding protein EcfA1 (274 aa).

The ABC transporter domain maps to 9 to 240 (CSFINVAFSY…EQELQKIRLD (232 aa)). ATP is bound at residue 41-48 (GHNGSGKS).

This sequence belongs to the ABC transporter superfamily. Energy-coupling factor EcfA family. As to quaternary structure, forms a stable energy-coupling factor (ECF) transporter complex composed of 2 membrane-embedded substrate-binding proteins (S component), 2 ATP-binding proteins (A component) and 2 transmembrane proteins (T component).

Its subcellular location is the cell membrane. Functionally, ATP-binding (A) component of a common energy-coupling factor (ECF) ABC-transporter complex. Unlike classic ABC transporters this ECF transporter provides the energy necessary to transport a number of different substrates. This chain is Energy-coupling factor transporter ATP-binding protein EcfA1, found in Mycoplasma genitalium (strain ATCC 33530 / DSM 19775 / NCTC 10195 / G37) (Mycoplasmoides genitalium).